The primary structure comprises 151 residues: Guanylate kinase homolog (151 aa).

A Guanylate kinase-like domain is found at 1–141; the sequence is MEREGVDYHY…AYSKLIQILQ (141 aa).

The protein belongs to the guanylate kinase family.

This chain is Guanylate kinase homolog, found in Bos taurus (Bovine).